A 737-amino-acid polypeptide reads, in one-letter code: MKVRVHELAKKYEIKNKEFLEILKKDIGITVTSHLSNLDEDQVNKIDDYFAKMNMLKVETVEPVKVHKEKKEEKPIRKIMDEDENDEGEGYSQKNNKKAKFQQTKNKKNNNITFEEDGNSHKNKGKKKKGRRTDFILKTVEATPDVVEEDGIKIIKFRGELTLGDFAEKLGVNSAEIIKKLFLKGQMLTINSPITLSMAEDLAADYDVLIEEEQEVELDFGEKFDLEIEDKAADLKERPPVITIMGHVDHGKTSLLDAIRTTNVVGGEAGGITQKIGAYQVERDGKRITFIDTPGHEAFTDMRARGAQVTDIAILVVAADDGVMPQTVEAISHAKVAKVPIIVAVNKIDKPEANPMKVKQELMEHGLVSAEWGGDVEFVEVSAKQKINLDGLLDTILITAEILELKGNNKKRAKGVVLESRLDPKIGPIADILVQEGTLKIGDVIVAGEVQGKVKALLNDKGERVNNATVSQPVEVIGFNNVPDAGDTMYVIQNEQHAKRIVEEVRKERKIQETTKKTISLESLSDQFKHEDLKELNLILRADSKGSVDALRDSLLKLSNDEVAVSIIQAASGAITESDVKLAEAAGAIIIGYNVRPTTKALKEAEVSKVEIRTSGIIYHITEDIEKALAGMLEPEYREEYLGRIEIKKVFKVSKVGNIAGCIVIDGKVKNDSNIRILRDNVVIYEGKLASLKRFKDDAKEVVAGQECGLGVENFNDIKDGDVVEAFEMVEVKRTLK.

The span at 69–80 (EKKEEKPIRKIM) shows a compositional bias: basic and acidic residues. Residues 69–130 (EKKEEKPIRK…HKNKGKKKKG (62 aa)) are disordered. Basic residues-rich tracts occupy residues 95 to 108 (NNKKAKFQQTKNKK) and 121 to 130 (HKNKGKKKKG). The 168-residue stretch at 237 to 404 (ERPPVITIMG…TILITAEILE (168 aa)) folds into the tr-type G domain. Residues 246 to 253 (GHVDHGKT) are G1. Residue 246–253 (GHVDHGKT) participates in GTP binding. The G2 stretch occupies residues 271 to 275 (GITQK). Residues 292–295 (DTPG) form a G3 region. Residues 292–296 (DTPGH) and 346–349 (NKID) each bind GTP. Positions 346–349 (NKID) are G4. The G5 stretch occupies residues 382–384 (SAK).

The protein belongs to the TRAFAC class translation factor GTPase superfamily. Classic translation factor GTPase family. IF-2 subfamily.

The protein resides in the cytoplasm. Functionally, one of the essential components for the initiation of protein synthesis. Protects formylmethionyl-tRNA from spontaneous hydrolysis and promotes its binding to the 30S ribosomal subunits. Also involved in the hydrolysis of GTP during the formation of the 70S ribosomal complex. The polypeptide is Translation initiation factor IF-2 (Fusobacterium nucleatum subsp. nucleatum (strain ATCC 25586 / DSM 15643 / BCRC 10681 / CIP 101130 / JCM 8532 / KCTC 2640 / LMG 13131 / VPI 4355)).